Reading from the N-terminus, the 374-residue chain is Carbamoyl phosphate synthase small chain (374 aa).

The segment at 1–186 (MTEPAILVLE…DRNEWKRAAP (186 aa)) is CPSase. L-glutamine contacts are provided by Ser47, Gly237, and Gly239. Positions 189–374 (KVVAYDYGVK…RFITMMAAQS (186 aa)) constitute a Glutamine amidotransferase type-1 domain. Cys265 functions as the Nucleophile in the catalytic mechanism. L-glutamine-binding residues include Leu266, Gln269, Asn307, Gly309, and Phe310. Catalysis depends on residues His349 and Glu351.

The protein belongs to the CarA family. As to quaternary structure, composed of two chains; the small (or glutamine) chain promotes the hydrolysis of glutamine to ammonia, which is used by the large (or ammonia) chain to synthesize carbamoyl phosphate. Tetramer of heterodimers (alpha,beta)4.

The enzyme catalyses hydrogencarbonate + L-glutamine + 2 ATP + H2O = carbamoyl phosphate + L-glutamate + 2 ADP + phosphate + 2 H(+). The catalysed reaction is L-glutamine + H2O = L-glutamate + NH4(+). It functions in the pathway amino-acid biosynthesis; L-arginine biosynthesis; carbamoyl phosphate from bicarbonate: step 1/1. Its pathway is pyrimidine metabolism; UMP biosynthesis via de novo pathway; (S)-dihydroorotate from bicarbonate: step 1/3. Functionally, small subunit of the glutamine-dependent carbamoyl phosphate synthetase (CPSase). CPSase catalyzes the formation of carbamoyl phosphate from the ammonia moiety of glutamine, carbonate, and phosphate donated by ATP, constituting the first step of 2 biosynthetic pathways, one leading to arginine and/or urea and the other to pyrimidine nucleotides. The small subunit (glutamine amidotransferase) binds and cleaves glutamine to supply the large subunit with the substrate ammonia. This chain is Carbamoyl phosphate synthase small chain, found in Xylella fastidiosa (strain 9a5c).